A 497-amino-acid chain; its full sequence is Reticulophagy regulator 1 (497 aa).

Residues 1–51 (MASPAPPEHAEEGCPAPAAEEQAPPSPPPPQASPAERQQQEEEAQEAGAAE) are disordered. At 1–59 (MASPAPPEHAEEGCPAPAAEEQAPPSPPPPQASPAERQQQEEEAQEAGAAEGAGLQVEE) the chain is on the cytoplasmic side. Positions 13–23 (GCPAPAAEEQA) are enriched in low complexity. Residues 60 to 80 (AAGRAAAAVTWLLGEPVLWLG) form a helical membrane-spanning segment. At 81–95 (CRADELLSWKRPLRS) the chain is on the lumenal side. The tract at residues 84–233 (DELLSWKRPL…LLCAFLCPLF (150 aa)) is reticulon homology domain. A helical transmembrane segment spans residues 96–116 (LLGFVAANLLFWFLALTPWRV). Topologically, residues 117 to 118 (YH) are cytoplasmic. A helical transmembrane segment spans residues 119 to 139 (LISVMILGRVIMQIIKDMVLS). The Lumenal portion of the chain corresponds to 140-208 (RTRGAQLWRS…LVCSVCTFFT (69 aa)). Phosphoserine is present on Ser-149. Ser-151 is subject to Phosphoserine; by CAMK2B. At Ser-153 the chain carries Phosphoserine. The helical transmembrane segment at 209 to 229 (ILGSYIPGVILSYLLLLCAFL) threads the bilayer. Residues 230 to 497 (CPLFKCNDIG…GFLSNLLGGH (268 aa)) lie on the Cytoplasmic side of the membrane. Over residues 319–330 (FNLSEGYTPQTD) the composition is skewed to polar residues. Disordered stretches follow at residues 319-365 (FNLS…EDEL), 377-396 (KEQL…AAGL), 436-455 (LSQA…GDDF), and 468-497 (SELG…LGGH). Composition is skewed to basic and acidic residues over residues 334 to 348 (DLDR…RDLS) and 377 to 388 (KEQLDSGHRPSK). Residues 443 to 455 (PEEDTDTEEGDDF) are compositionally biased toward acidic residues. Positions 453 to 458 (DDFELL) match the LIR motif motif. Over residues 471-490 (GLTQDQEAEAQQNKKSSGFL) the composition is skewed to polar residues.

It belongs to the RETREG family. As to quaternary structure, homooligomer; oligomerization is enhanced following endoplasmic reticulum stress and is mediated by the reticulon homology domain. Interacts with ATG8 family modifier proteins MAP1LC3A, MAP1LC3B, MAP1LC3C, GABARAP, GABARAPL1 and GABARAPL2. Shows higher affinity for GABARAPL1 than for MAP1LC3A or MAP1LC3B. In terms of processing, phosphorylation at Ser-151 by CAMK2B enhances oligomerization and membrane scission and reticulophagy activity. Overexpressed in esophageal squamous cell carcinoma.

It is found in the golgi apparatus. The protein localises to the cis-Golgi network membrane. The protein resides in the endoplasmic reticulum membrane. Endoplasmic reticulum (ER)-anchored autophagy regulator which mediates ER delivery into lysosomes through sequestration into autophagosomes. Promotes membrane remodeling and ER scission via its membrane bending capacity and targets the fragments into autophagosomes via interaction with ATG8 family proteins. Active under basal conditions. Required for collagen quality control in a LIR motif-dependent manner. Required for long-term survival of nociceptive and autonomic ganglion neurons. Its function is as follows. (Microbial infection) During SARS-CoV-2 infection, RETREG1-mediated reticulophagy is promoted by SARS-CoV-2 ORF3A protein. This induces endoplasmic reticulum stress and inflammatory responses and facilitates viral infection. The chain is Reticulophagy regulator 1 from Homo sapiens (Human).